Consider the following 100-residue polypeptide: Urease subunit gamma (100 aa).

The protein belongs to the urease gamma subunit family. As to quaternary structure, heterotrimer of UreA (gamma), UreB (beta) and UreC (alpha) subunits. Three heterotrimers associate to form the active enzyme.

Its subcellular location is the cytoplasm. It carries out the reaction urea + 2 H2O + H(+) = hydrogencarbonate + 2 NH4(+). Its pathway is nitrogen metabolism; urea degradation; CO(2) and NH(3) from urea (urease route): step 1/1. The chain is Urease subunit gamma from Yersinia bercovieri.